We begin with the raw amino-acid sequence, 54 residues long: Kazal-type inhibitor-like protein (54 aa).

In terms of domain architecture, Kazal-like spans 1-54 (MKVNCKGYPTKFCFGKPLPHCASDGKTYPNRCRFCNAFVKSHGLITLRYYGKCK). 3 cysteine pairs are disulfide-bonded: Cys-5–Cys-35, Cys-13–Cys-32, and Cys-21–Cys-53.

As to quaternary structure, may form disulfide-linked dimers or trimers (in vitro). Expressed by the venom gland.

It localises to the secreted. Functionally, partially inhibits trypsin in vitro at slightly acidic pH and concentrations in excess of 0.3 mM. Has no protease inhibitory activity at neutral or basic pH. Has no antibacterial activity. Shows no toxicity in vertebrates apart from transient paw edema in mouse. The sequence is that of Kazal-type inhibitor-like protein from Bothriechis schlegelii (Eyelash palm pitviper).